A 487-amino-acid polypeptide reads, in one-letter code: Serine/threonine-protein kinase 4 (487 aa).

The residue at position 1 (Met1) is an N-acetylmethionine. Thr3 is modified (phosphothreonine). Residues 30–281 (FDVLEKLGEG…ATQLLQHPFV (252 aa)) form the Protein kinase domain. ATP-binding positions include 36–44 (LGEGSYGSV) and Lys59. The active-site Proton acceptor is Asp149. Thr183 is subject to Phosphothreonine; by autocatalysis. A Phosphoserine modification is found at Ser265. The stretch at 290-310 (LRDLINEAMDVKLKRQESQQR) forms a coiled coil. Residues 303–312 (KRQESQQREV) show a composition bias toward basic and acidic residues. Positions 303–332 (KRQESQQREVDQDDEENSEEDEMDSGTMVR) are disordered. Positions 313–326 (DQDDEENSEEDEMD) are enriched in acidic residues. Ser320 is subject to Phosphoserine. 2 positions are modified to phosphothreonine: Thr340 and Thr367. Thr387 carries the post-translational modification Phosphothreonine; by PKB/AKT1. 2 positions are modified to phosphoserine: Ser410 and Ser414. Tyr433 is modified (phosphotyrosine). One can recognise an SARAH domain in the interval 433 to 480 (YEFLKSWTVEDLQKRLLALDPMMEQEIEEIRQKYQSKRQPILDAIEAK).

It belongs to the protein kinase superfamily. STE Ser/Thr protein kinase family. STE20 subfamily. Homodimer; mediated via the coiled-coil region. Interacts with NORE1, which inhibits autoactivation. Interacts with and stabilizes SAV1. Interacts with RASSF1. Interacts with FOXO3. Interacts with RASSF2 (via SARAH domain). Interacts with AR, PKB/AKT1, TNNI3 and SIRT1. Interacts with DLG5 (via PDZ domain 3). Interacts with MARK3 and SCRIB in the presence of DLG5. The cofactor is Mg(2+). In terms of processing, autophosphorylated on serine and threonine residues. Phosphorylation at Thr-387 by PKB/AKT1, leads to inhibition of its: kinase activity, nuclear translocation and autophosphorylation at Thr-183. It also diminishes its cleavage by caspases and its ability to phosphorylate FOXO3. Proteolytically cleaved by caspase-3 during apoptosis at Asp-326 and Asp-349 resulting in a 37 kDa or a 39 kDa subunit respectively. The 39 kDa subunit is further cleaved into the 37 kDa form. Proteolytic cleavage results in kinase activation and nuclear translocation of the truncated form (MST1/N). It is less likely that cleavage at Asp-349 is a prerequisite for activation as this site is not conserved in the murine ortholog.

The protein localises to the cytoplasm. It localises to the nucleus. The catalysed reaction is L-seryl-[protein] + ATP = O-phospho-L-seryl-[protein] + ADP + H(+). It carries out the reaction L-threonyl-[protein] + ATP = O-phospho-L-threonyl-[protein] + ADP + H(+). Its activity is regulated as follows. Inhibited by the C-terminal non-catalytic region. Activated by caspase-cleavage. Full activation also requires homodimerization and autophosphorylation of Thr-183. Activated by RASSF1 which acts by preventing its dephosphorylation. In terms of biological role, stress-activated, pro-apoptotic kinase which, following caspase-cleavage, enters the nucleus and induces chromatin condensation followed by internucleosomal DNA fragmentation. Key component of the Hippo signaling pathway which plays a pivotal role in organ size control and tumor suppression by restricting proliferation and promoting apoptosis. The core of this pathway is composed of a kinase cascade wherein STK3/MST2 and STK4/MST1, in complex with its regulatory protein SAV1, phosphorylates and activates LATS1/2 in complex with its regulatory protein MOB1, which in turn phosphorylates and inactivates YAP1 oncoprotein and WWTR1/TAZ. Phosphorylation of YAP1 by LATS2 inhibits its translocation into the nucleus to regulate cellular genes important for cell proliferation, cell death, and cell migration. STK3/MST2 and STK4/MST1 are required to repress proliferation of mature hepatocytes, to prevent activation of facultative adult liver stem cells (oval cells), and to inhibit tumor formation. Phosphorylates 'Ser-14' of histone H2B (H2BS14ph) during apoptosis. Phosphorylates FOXO3 upon oxidative stress, which results in its nuclear translocation and cell death initiation. Phosphorylates MOBKL1A, MOBKL1B and RASSF2. Phosphorylates TNNI3 (cardiac Tn-I) and alters its binding affinity to TNNC1 (cardiac Tn-C) and TNNT2 (cardiac Tn-T). Phosphorylates FOXO1 on 'Ser-212' and regulates its activation and stimulates transcription of PMAIP1 in a FOXO1-dependent manner. Phosphorylates SIRT1 and inhibits SIRT1-mediated p53/TP53 deacetylation, thereby promoting p53/TP53 dependent transcription and apoptosis upon DNA damage. Acts as an inhibitor of PKB/AKT1. Phosphorylates AR on 'Ser-650' and suppresses its activity by intersecting with PKB/AKT1 signaling and antagonizing formation of AR-chromatin complexes. In Aotus nancymaae (Ma's night monkey), this protein is Serine/threonine-protein kinase 4 (STK4).